A 460-amino-acid chain; its full sequence is C4-dicarboxylate transport protein (460 aa).

9 helical membrane passes run serine 20–proline 40, leucine 56–methionine 76, tyrosine 88–valine 108, isoleucine 153–glycine 173, isoleucine 200–isoleucine 220, leucine 234–cysteine 254, valine 301–leucine 321, isoleucine 342–glycine 362, and isoleucine 364–isoleucine 384. Positions proline 438 to valine 460 are disordered.

The protein belongs to the dicarboxylate/amino acid:cation symporter (DAACS) (TC 2.A.23) family.

It is found in the cell inner membrane. Its function is as follows. Responsible for the transport of dicarboxylates such as succinate, fumarate, and malate from the periplasm across the membrane. The sequence is that of C4-dicarboxylate transport protein from Pseudomonas savastanoi pv. phaseolicola (strain 1448A / Race 6) (Pseudomonas syringae pv. phaseolicola (strain 1448A / Race 6)).